Reading from the N-terminus, the 150-residue chain is Monothiol glutaredoxin-5, mitochondrial (150 aa).

A mitochondrion-targeting transit peptide spans 1-29 (MFLPKFNPIRSFSPILRAKTLLRYQNRMY). The 106-residue stretch at 35–140 (RKAIEDAIES…DLLEEAQALV (106 aa)) folds into the Glutaredoxin domain. Residue lysine 52 participates in glutathione binding. Residue cysteine 60 coordinates [2Fe-2S] cluster. Glutathione contacts are provided by residues 92 to 96 (REGIK), isoleucine 104, and 117 to 118 (CD).

The protein belongs to the glutaredoxin family. Monothiol subfamily. Homodimer. Interacts with SSQ1. Interacts with BOL1.

The protein resides in the mitochondrion matrix. Monothiol glutaredoxin involved in mitochondrial iron-sulfur (Fe/S) cluster transfer. Receives 2Fe/2S clusters from scaffold protein ISU1 and mediates their transfer to apoproteins, to the 4Fe/FS cluster biosynthesis machinery, or export from mitochondrion. The sequence is that of Monothiol glutaredoxin-5, mitochondrial from Saccharomyces cerevisiae (strain ATCC 204508 / S288c) (Baker's yeast).